The sequence spans 596 residues: Probable lysosomal cobalamin transporter (596 aa).

The next 10 membrane-spanning stretches (helical) occupy residues alanine 7–phenylalanine 27, isoleucine 46–valine 66, isoleucine 95–threonine 115, threonine 145–alanine 165, leucine 196–leucine 216, leucine 313–threonine 333, isoleucine 350–valine 370, valine 376–isoleucine 396, methionine 420–isoleucine 440, and phenylalanine 507–phenylalanine 527. The segment at tryptophan 566 to aspartate 596 is disordered. Over residues isoleucine 587–aspartate 596 the composition is skewed to basic and acidic residues.

It belongs to the LIMR family. LMBRD1 subfamily.

Its subcellular location is the lysosome membrane. In terms of biological role, probable lysosomal cobalamin transporter. Required to export cobalamin from lysosomes allowing its conversion to cofactors. The sequence is that of Probable lysosomal cobalamin transporter from Sclerotinia sclerotiorum (strain ATCC 18683 / 1980 / Ss-1) (White mold).